The primary structure comprises 201 residues: MGYMGCWCSNLGRKYSGTVSPQRSVQPEALSYEMVYSWQQSFDTLMSFKSGQKCFAEFLKSEYSDENILFWQACEELKREKNSEKMEEKARIIYEDFISILSPKEVSLDSKVREIVNTNMSRPTQNTFEDAQHQIYQLMARDSYPRFLTSIFYRETLASFGITEMDIGGDEEKEREQRAERARLNVPATAAEGSSKDISMV.

The RGS domain maps to 37–156 (SWQQSFDTLM…FLTSIFYRET (120 aa)). Residues 168-201 (GGDEEKEREQRAERARLNVPATAAEGSSKDISMV) form a disordered region. A compositionally biased stretch (basic and acidic residues) spans 170-183 (DEEKEREQRAERAR).

Expressed in most or all neurons.

In terms of biological role, inhibits G protein signaling in nervous system, interacting preferentially with the G(O) subfamily member goa-1. In vitro, protein acts as a GTPase activator of goa-1. Rgs-1 and rgs-2 redundantly adjust signaling when worms are fed to allow rapid induction of egg-laying behavior. This Caenorhabditis elegans protein is Regulator of G-protein signaling rgs-1 (rgs-1).